Consider the following 526-residue polypeptide: Bifunctional purine biosynthesis protein PurH (526 aa).

The region spanning 1–148 (MSLNNIIKNA…KNYKDVIVIV (148 aa)) is the MGS-like domain.

Belongs to the PurH family.

It carries out the reaction (6R)-10-formyltetrahydrofolate + 5-amino-1-(5-phospho-beta-D-ribosyl)imidazole-4-carboxamide = 5-formamido-1-(5-phospho-D-ribosyl)imidazole-4-carboxamide + (6S)-5,6,7,8-tetrahydrofolate. The enzyme catalyses IMP + H2O = 5-formamido-1-(5-phospho-D-ribosyl)imidazole-4-carboxamide. The protein operates within purine metabolism; IMP biosynthesis via de novo pathway; 5-formamido-1-(5-phospho-D-ribosyl)imidazole-4-carboxamide from 5-amino-1-(5-phospho-D-ribosyl)imidazole-4-carboxamide (10-formyl THF route): step 1/1. It functions in the pathway purine metabolism; IMP biosynthesis via de novo pathway; IMP from 5-formamido-1-(5-phospho-D-ribosyl)imidazole-4-carboxamide: step 1/1. The sequence is that of Bifunctional purine biosynthesis protein PurH from Buchnera aphidicola subsp. Schizaphis graminum (strain Sg).